Reading from the N-terminus, the 370-residue chain is Coiled-coil domain-containing protein 89 (370 aa).

Residues 1–21 (MPQEEKTLRMDTPPPDEILGK) are disordered. At Thr-12 the chain carries Phosphothreonine. Residues 36–346 (KEMDGLREAL…YDELRLQSEA (311 aa)) are a coiled coil.

It belongs to the CCDC89 family. In terms of assembly, interacts with HEY1. In terms of tissue distribution, expression is restricted to the adult testis, where localization is almost exclusive to round spermatids.

It localises to the cytoplasm. Its subcellular location is the nucleus. The chain is Coiled-coil domain-containing protein 89 from Mus musculus (Mouse).